The sequence spans 380 residues: UDP-3-O-acylglucosamine N-acyltransferase (380 aa).

His-263 serves as the catalytic Proton acceptor.

It belongs to the transferase hexapeptide repeat family. LpxD subfamily. Homotrimer.

It carries out the reaction a UDP-3-O-[(3R)-3-hydroxyacyl]-alpha-D-glucosamine + a (3R)-hydroxyacyl-[ACP] = a UDP-2-N,3-O-bis[(3R)-3-hydroxyacyl]-alpha-D-glucosamine + holo-[ACP] + H(+). The protein operates within bacterial outer membrane biogenesis; LPS lipid A biosynthesis. Its function is as follows. Catalyzes the N-acylation of UDP-3-O-acylglucosamine using 3-hydroxyacyl-ACP as the acyl donor. Is involved in the biosynthesis of lipid A, a phosphorylated glycolipid that anchors the lipopolysaccharide to the outer membrane of the cell. The chain is UDP-3-O-acylglucosamine N-acyltransferase from Rhodopirellula baltica (strain DSM 10527 / NCIMB 13988 / SH1).